The sequence spans 439 residues: IAA-amino acid hydrolase ILR1-like 2 (439 aa).

An N-terminal signal peptide occupies residues 1-21; sequence MALNKLLSLTFQLLLFLLSVS. 5 residues coordinate Mn(2+): cysteine 137, histidine 139, glutamate 173, histidine 197, and histidine 397. Positions 436-439 match the Prevents secretion from ER motif; the sequence is HEEL.

The protein belongs to the peptidase M20 family. Monomer. Mn(2+) serves as cofactor. Expressed in leaves, stems, siliques, seeds and flowers. Detected in the distal tips of cotyledons and seedling leaves, hydathodes of leaves from mature plants, pollen, ovules and developing seeds.

Its subcellular location is the endoplasmic reticulum lumen. Functionally, hydrolyzes certain amino acid conjugates of the plant growth regulator indole-3-acetic acid (IAA), including IAA-Ala, IAA-Leu, IAA-Met, IAA-Phe, IAA-Ser, IAA-Thr, IAA-Tyr and IAA-Val. Is the most efficient enzyme of the ILL family for IAA-Ala. Not important for IAA-Leu hydrolysis in roots. May act with ILR1 to provide free IAA to germinating seedlings. In Arabidopsis thaliana (Mouse-ear cress), this protein is IAA-amino acid hydrolase ILR1-like 2.